Here is a 374-residue protein sequence, read N- to C-terminus: DNA replication and repair protein RecF (374 aa).

Position 30-37 (30-37 (GENAQGKT)) interacts with ATP.

It belongs to the RecF family.

It localises to the cytoplasm. Functionally, the RecF protein is involved in DNA metabolism; it is required for DNA replication and normal SOS inducibility. RecF binds preferentially to single-stranded, linear DNA. It also seems to bind ATP. The chain is DNA replication and repair protein RecF from Lactiplantibacillus plantarum (strain ATCC BAA-793 / NCIMB 8826 / WCFS1) (Lactobacillus plantarum).